We begin with the raw amino-acid sequence, 314 residues long: Ribonuclease Z (314 aa).

Positions 61, 63, 65, 66, 137, 207, and 263 each coordinate Zn(2+). Catalysis depends on Asp65, which acts as the Proton acceptor.

Belongs to the RNase Z family. As to quaternary structure, homodimer. It depends on Zn(2+) as a cofactor.

The catalysed reaction is Endonucleolytic cleavage of RNA, removing extra 3' nucleotides from tRNA precursor, generating 3' termini of tRNAs. A 3'-hydroxy group is left at the tRNA terminus and a 5'-phosphoryl group is left at the trailer molecule.. Zinc phosphodiesterase, which displays some tRNA 3'-processing endonuclease activity. Probably involved in tRNA maturation, by removing a 3'-trailer from precursor tRNA. The protein is Ribonuclease Z of Thermococcus gammatolerans (strain DSM 15229 / JCM 11827 / EJ3).